Here is a 324-residue protein sequence, read N- to C-terminus: Aldo-keto reductase family 1 member A1-A (324 aa).

NADP(+) contacts are provided by residues 10–19 (GQRMPTVGLG), Thr-20, Trp-21, and Asp-44. Catalysis depends on Tyr-49, which acts as the Proton donor. Residues Ser-161, Asn-162, Ser-210, Leu-212, Ser-214, Lys-262, Ser-263, Val-264, Thr-265, Arg-268, Gln-271, and Asn-272 each coordinate NADP(+).

This sequence belongs to the aldo/keto reductase family.

The protein localises to the cytoplasm. The protein resides in the cytosol. It is found in the apical cell membrane. The catalysed reaction is a primary alcohol + NADP(+) = an aldehyde + NADPH + H(+). The enzyme catalyses S-nitroso-CoA + NADPH + H(+) = sulfinamide-CoA + NADP(+). It catalyses the reaction S-nitrosoglutathione + NADPH + H(+) = S-(hydroxysulfenamide)glutathione + NADP(+). Its function is as follows. Catalyzes the NADPH-dependent reduction of a wide variety of carbonyl-containing compounds to their corresponding alcohols. Displays enzymatic activity towards endogenous metabolites such as aromatic and aliphatic aldehydes, ketones, monosaccharides and bile acids. Acts as an aldehyde-detoxification enzyme. Also acts as an inhibitor of protein S-nitrosylation by mediating degradation of S-nitroso-coenzyme A (S-nitroso-CoA), a cofactor required to S-nitrosylate proteins. Also acts as a S-nitroso-glutathione reductase by catalyzing the NADPH-dependent reduction of S-nitrosoglutathione. Displays no reductase activity towards retinoids. This is Aldo-keto reductase family 1 member A1-A (akr1a1a) from Danio rerio (Zebrafish).